Here is a 448-residue protein sequence, read N- to C-terminus: Tubulin beta chain (448 aa).

Gln-11, Glu-69, Ser-138, Gly-142, Thr-143, Gly-144, Asn-204, and Asn-226 together coordinate GTP. A Mg(2+)-binding site is contributed by Glu-69. The interval 425–448 (YQDASISEGEEEYLEEEEPLEHEE) is disordered. The span at 432 to 448 (EGEEEYLEEEEPLEHEE) shows a compositional bias: acidic residues.

The protein belongs to the tubulin family. Dimer of alpha and beta chains. A typical microtubule is a hollow water-filled tube with an outer diameter of 25 nm and an inner diameter of 15 nM. Alpha-beta heterodimers associate head-to-tail to form protofilaments running lengthwise along the microtubule wall with the beta-tubulin subunit facing the microtubule plus end conferring a structural polarity. Microtubules usually have 13 protofilaments but different protofilament numbers can be found in some organisms and specialized cells. Mg(2+) is required as a cofactor.

The protein resides in the cytoplasm. The protein localises to the cytoskeleton. Tubulin is the major constituent of microtubules, a cylinder consisting of laterally associated linear protofilaments composed of alpha- and beta-tubulin heterodimers. Microtubules grow by the addition of GTP-tubulin dimers to the microtubule end, where a stabilizing cap forms. Below the cap, tubulin dimers are in GDP-bound state, owing to GTPase activity of alpha-tubulin. The protein is Tubulin beta chain (benR) of Aspergillus parasiticus.